The primary structure comprises 106 residues: Thioredoxin-2 (106 aa).

A Thioredoxin domain is found at 1-106; the sequence is MVYQVKDKAD…RLEDVIKANI (106 aa). Residues Cys-32 and Cys-35 each act as nucleophile in the active site. The cysteines at positions 32 and 35 are disulfide-linked.

It belongs to the thioredoxin family. In terms of assembly, monomer.

Its function is as follows. Participates in various redox reactions through the reversible oxidation of its active center dithiol to a disulfide and catalyzes dithiol-disulfide exchange reactions. As a reducing substrate of peroxiredoxin 1, thioredoxin 2 is preferred over thioredoxin 1. The polypeptide is Thioredoxin-2 (Drosophila melanogaster (Fruit fly)).